The primary structure comprises 348 residues: SUMO-activating enzyme subunit 1 (348 aa).

The protein belongs to the ubiquitin-activating E1 family. In terms of assembly, heterodimer of sae1 and uba2/sae2. The heterodimer corresponds to the two domains that are encoded on a single polypeptide chain in ubiquitin-activating enzyme E1. Interacts with ube2i.

The protein localises to the nucleus. The protein operates within protein modification; protein sumoylation. Functionally, the heterodimer acts as an E1 ligase for sumo1, sumo2, and sumo3. It mediates ATP-dependent activation of sumo proteins followed by formation of a thioester bond between a sumo protein and a conserved active site cysteine residue on uba2/sae2. The sequence is that of SUMO-activating enzyme subunit 1 (sae1) from Danio rerio (Zebrafish).